The following is a 421-amino-acid chain: Zinc finger protein Pegasus (421 aa).

A disordered region spans residues 35–55; that stretch reads GDKEAETLQGAGTEGDQNGLD. 3 C2H2-type zinc fingers span residues 82-104, 110-132, and 138-161; these read LKCR…IRIH, HRCH…MRSH, and YKCE…RRKH. The span at 229–238 shows a compositional bias: polar residues; the sequence is SMTKSSQTSG. 2 disordered regions span residues 229–249 and 292–358; these read SMTK…LMVD and QPAT…PTLP. Low complexity predominate over residues 292–313; the sequence is QPATPAVVSSVSASIAQSSSPT. Positions 339 to 351 are enriched in polar residues; it reads HTSTPSISNSQPS. 2 C2H2-type zinc fingers span residues 366 to 388 and 394 to 418; these read HHCQ…MGCH and FQCN…RGQH.

It belongs to the Ikaros C2H2-type zinc-finger protein family. As to quaternary structure, probably self-associates.

The protein localises to the nucleus. In terms of biological role, transcriptional repressor that binds the core 5'GNNTGTNG-3' DNA consensus sequence. This Gallus gallus (Chicken) protein is Zinc finger protein Pegasus (IKZF5).